Consider the following 309-residue polypeptide: Vomeronasal type-1 receptor 46 (309 aa).

The Extracellular segment spans residues 1–20 (MNKANIFCTDTNMKVILFSE). The chain crosses the membrane as a helical span at residues 21-41 (VSVGISANSILFISHLCMFLG). The Cytoplasmic portion of the chain corresponds to 42-50 (ESRPKPIDL). A helical membrane pass occupies residues 51-71 (YIAFFSLTHLMLLVTMGLIAV). At 72–85 (DMFMPGGRWDSTTC) the chain is on the extracellular side. Cysteine 85 and cysteine 171 are disulfide-bonded. A helical membrane pass occupies residues 86–106 (TFLMYLHIVLRGPTLCATCLL). Residues 107-134 (NVLWTITLSPRNSCLTKFKHKSPHHISG) lie on the Cytoplasmic side of the membrane. A helical transmembrane segment spans residues 135 to 155 (AFLFLCVLYMSLSSELLSITA). The Extracellular segment spans residues 156 to 192 (SLNLTSENFLYVSQSCSILPMSYSIKSMFSTKMAIRE). N-linked (GlcNAc...) asparagine glycosylation occurs at asparagine 158. A helical membrane pass occupies residues 193 to 213 (AFLIGLMVLSSGYMVALLWSH). Residues 214–237 (KKQAQHLHSNSLSLKASPEQRATR) lie on the Cytoplasmic side of the membrane. A helical membrane pass occupies residues 238–258 (TIMLLMSFFVVFYILDSVIFY). Topologically, residues 259-267 (SRMKFKDDS) are extracellular. The chain crosses the membrane as a helical span at residues 268-288 (IFVCVQIIVSHSYVTVSPFVF). The Cytoplasmic segment spans residues 289–309 (ICTEKHIIKFFWSLCGRIVNI).

It belongs to the G-protein coupled receptor 1 family.

The protein localises to the cell membrane. Functionally, putative pheromone receptor implicated in the regulation of social and reproductive behavior. The polypeptide is Vomeronasal type-1 receptor 46 (Vmn1r46) (Mus musculus (Mouse)).